Here is a 376-residue protein sequence, read N- to C-terminus: Glutamate 5-kinase (376 aa).

Lys15 is an ATP binding site. Substrate-binding residues include Ser56, Asp143, and Asn155. Ser175 to Asp176 contacts ATP. Positions Lys281–Thr358 constitute a PUA domain.

This sequence belongs to the glutamate 5-kinase family.

It is found in the cytoplasm. The enzyme catalyses L-glutamate + ATP = L-glutamyl 5-phosphate + ADP. It participates in amino-acid biosynthesis; L-proline biosynthesis; L-glutamate 5-semialdehyde from L-glutamate: step 1/2. Its function is as follows. Catalyzes the transfer of a phosphate group to glutamate to form L-glutamate 5-phosphate. The polypeptide is Glutamate 5-kinase (Rhodopseudomonas palustris (strain BisB18)).